A 37-amino-acid chain; its full sequence is Large ribosomal subunit protein bL36c (37 aa).

This sequence belongs to the bacterial ribosomal protein bL36 family.

The protein localises to the plastid. The polypeptide is Large ribosomal subunit protein bL36c (Cuscuta gronovii (Common dodder)).